Consider the following 525-residue polypeptide: COP9 signalosome complex subunit 1b (525 aa).

The 163-residue stretch at 298–460 (HFLNANFDHC…KILFAKEADQ (163 aa)) folds into the PCI domain.

This sequence belongs to the CSN1 family. In terms of assembly, component of the CSN complex, probably composed of CSN1b, alien/CSN2, CSN3, CSN4, CSN5, CSN6, CSN7 and CSN8.

It is found in the cytoplasm. It localises to the nucleus. In terms of biological role, essential component of the COP9 signalosome complex (CSN), a complex involved in various cellular and developmental processes. The CSN complex is an essential regulator of the ubiquitin (Ubl) conjugation pathway by mediating the deneddylation of the cullin subunits of the SCF-type E3 ligase complexes, leading to decrease the Ubl ligase activity of SCF. The CSN complex plays an essential role in oogenesis and embryogenesis and is required for proper photoreceptor R cell differentiation and promote lamina glial cell migration or axon targeting. It also promotes Ubl-dependent degradation of cyclin E (CycE) during early oogenesis. The chain is COP9 signalosome complex subunit 1b (CSN1b) from Drosophila melanogaster (Fruit fly).